Reading from the N-terminus, the 421-residue chain is 4-hydroxy-3-methylbut-2-en-1-yl diphosphate synthase (flavodoxin) (421 aa).

[4Fe-4S] cluster contacts are provided by Cys-311, Cys-314, Cys-357, and Glu-364.

The protein belongs to the IspG family. [4Fe-4S] cluster is required as a cofactor.

It catalyses the reaction (2E)-4-hydroxy-3-methylbut-2-enyl diphosphate + oxidized [flavodoxin] + H2O + 2 H(+) = 2-C-methyl-D-erythritol 2,4-cyclic diphosphate + reduced [flavodoxin]. Its pathway is isoprenoid biosynthesis; isopentenyl diphosphate biosynthesis via DXP pathway; isopentenyl diphosphate from 1-deoxy-D-xylulose 5-phosphate: step 5/6. Converts 2C-methyl-D-erythritol 2,4-cyclodiphosphate (ME-2,4cPP) into 1-hydroxy-2-methyl-2-(E)-butenyl 4-diphosphate. This is 4-hydroxy-3-methylbut-2-en-1-yl diphosphate synthase (flavodoxin) from Xanthomonas oryzae pv. oryzae (strain KACC10331 / KXO85).